The chain runs to 392 residues: L-rhamnonate dehydratase (392 aa).

Substrate-binding residues include His-22 and Arg-48. The Mg(2+) site is built by Asp-214, Glu-240, and Glu-268. The Proton acceptor role is filled by His-318. Glu-338 is a binding site for substrate.

This sequence belongs to the mandelate racemase/muconate lactonizing enzyme family. RhamD subfamily. Homooctamer; tetramer of dimers. Requires Mg(2+) as cofactor.

The enzyme catalyses L-rhamnonate = 2-dehydro-3-deoxy-L-rhamnonate + H2O. Catalyzes the dehydration of L-rhamnonate to 2-keto-3-deoxy-L-rhamnonate (KDR). The polypeptide is L-rhamnonate dehydratase (Paraburkholderia xenovorans (strain LB400)).